A 200-amino-acid polypeptide reads, in one-letter code: Holliday junction branch migration complex subunit RuvA (200 aa).

Positions 1 to 64 (MIGHLRGIIV…EDAHTLYGFH (64 aa)) are domain I. A domain II region spans residues 65-143 (NDHERRLFRA…RWHTNDTPSP (79 aa)). The tract at residues 144 to 148 (EGLRS) is flexible linker. The tract at residues 149 to 200 (SNTQPTQDAISALMALGYKPQEAKRAIDAIQKPDLSAETLIRLALKQMVLGT) is domain III.

Belongs to the RuvA family. As to quaternary structure, homotetramer. Forms an RuvA(8)-RuvB(12)-Holliday junction (HJ) complex. HJ DNA is sandwiched between 2 RuvA tetramers; dsDNA enters through RuvA and exits via RuvB. An RuvB hexamer assembles on each DNA strand where it exits the tetramer. Each RuvB hexamer is contacted by two RuvA subunits (via domain III) on 2 adjacent RuvB subunits; this complex drives branch migration. In the full resolvosome a probable DNA-RuvA(4)-RuvB(12)-RuvC(2) complex forms which resolves the HJ.

It localises to the cytoplasm. The RuvA-RuvB-RuvC complex processes Holliday junction (HJ) DNA during genetic recombination and DNA repair, while the RuvA-RuvB complex plays an important role in the rescue of blocked DNA replication forks via replication fork reversal (RFR). RuvA specifically binds to HJ cruciform DNA, conferring on it an open structure. The RuvB hexamer acts as an ATP-dependent pump, pulling dsDNA into and through the RuvAB complex. HJ branch migration allows RuvC to scan DNA until it finds its consensus sequence, where it cleaves and resolves the cruciform DNA. In Coxiella burnetii (strain CbuG_Q212) (Coxiella burnetii (strain Q212)), this protein is Holliday junction branch migration complex subunit RuvA.